The chain runs to 307 residues: Zinc-alpha-2-glycoprotein (307 aa).

The N-terminal stretch at 1–17 (MVPVLLSLPLLLGPAVF) is a signal peptide. Glutamine 18 bears the Pyrrolidone carboxylic acid mark. Cysteine 118 and cysteine 181 are joined by a disulfide. Asparagine 123, asparagine 190, and asparagine 254 each carry an N-linked (GlcNAc...) asparagine glycan. An Ig-like C1-type domain is found at 202 to 287 (PTVTITSRVI…DHRGFSQSLS (86 aa)). An intrachain disulfide couples cysteine 220 to cysteine 275.

Belongs to the MHC class I family. In terms of assembly, interacts with PIP.

The protein localises to the secreted. Functionally, stimulates lipid degradation in adipocytes and causes the extensive fat losses associated with some advanced cancers. In Mus musculus (Mouse), this protein is Zinc-alpha-2-glycoprotein (Azgp1).